A 561-amino-acid polypeptide reads, in one-letter code: Acylcarnitine hydrolase (561 aa).

A signal peptide spans 1–26; the sequence is MTRNQLHNWLNAGFFGLLLLLIHVQG. Cysteine 97 and cysteine 125 are oxidised to a cystine. Residue serine 230 is the Acyl-ester intermediate of the active site. Cysteine 282 and cysteine 293 form a disulfide bridge. Active-site charge relay system residues include glutamate 347 and histidine 459. The short motif at 558-561 is the Prevents secretion from ER element; sequence HREL.

It belongs to the type-B carboxylesterase/lipase family. As to expression, detected in liver (at protein level).

The protein resides in the microsome. The protein localises to the endoplasmic reticulum. The enzyme catalyses an O-acyl-(R)-carnitine + H2O = (R)-carnitine + a fatty acid + H(+). It carries out the reaction all-trans-retinyl hexadecanoate + H2O = all-trans-retinol + hexadecanoate + H(+). Functionally, hydrolase with high activity towards palmitoylcarnitine. Is also active with p-nitrophenylacetate and alpha-naphthylacetate. May also hydrolyze retinyl esters. The protein is Acylcarnitine hydrolase of Mus musculus (Mouse).